A 933-amino-acid polypeptide reads, in one-letter code: Isoleucine--tRNA ligase (933 aa).

The 'HIGH' region motif lies at 57–67 (PYANGNIHVGH). E554 lines the L-isoleucyl-5'-AMP pocket. Residues 595-599 (KMSKS) carry the 'KMSKS' region motif. K598 is an ATP binding site.

This sequence belongs to the class-I aminoacyl-tRNA synthetase family. IleS type 1 subfamily. As to quaternary structure, monomer.

Its subcellular location is the cytoplasm. It catalyses the reaction tRNA(Ile) + L-isoleucine + ATP = L-isoleucyl-tRNA(Ile) + AMP + diphosphate. Its function is as follows. Catalyzes the attachment of isoleucine to tRNA(Ile). As IleRS can inadvertently accommodate and process structurally similar amino acids such as valine, to avoid such errors it has two additional distinct tRNA(Ile)-dependent editing activities. One activity is designated as 'pretransfer' editing and involves the hydrolysis of activated Val-AMP. The other activity is designated 'posttransfer' editing and involves deacylation of mischarged Val-tRNA(Ile). This Streptococcus pyogenes serotype M6 (strain ATCC BAA-946 / MGAS10394) protein is Isoleucine--tRNA ligase.